The primary structure comprises 496 residues: Thiamine transporter 2 (496 aa).

At 1 to 7 (MDCYRTS) the chain is on the cytoplasmic side. The chain crosses the membrane as a helical span at residues 8 to 28 (LSSSWIYPTVILCLFGFFSMM). Over 29–53 (RPSEPFLIPYLSGPDKNLTSAEITN) the chain is Extracellular. Asparagine 45 carries an N-linked (GlcNAc...) asparagine glycan. Residues 54–74 (EIFPVWTYSYLVLLLPVFVLT) traverse the membrane as a helical segment. Over 75 to 81 (DYVRYKP) the chain is Cytoplasmic. A helical transmembrane segment spans residues 82-102 (VIILQGISFIITWLLLLFGQG). Topologically, residues 103 to 110 (VKTMQVVE) are extracellular. Residues 111–131 (FFYGMVTAAEVAYYAYIYSVV) form a helical membrane-spanning segment. The Cytoplasmic portion of the chain corresponds to 132–144 (SPEHYQRVSGYCR). The helical transmembrane segment at 145 to 165 (SVTLAAYTAGSVLAQLLVSLA) threads the bilayer. Asparagine 166 is a glycosylation site (N-linked (GlcNAc...) asparagine). Residues 166-169 (NMSY) are Extracellular-facing. Residues 170–190 (FYLNVISLASVSVAFLFSLFL) traverse the membrane as a helical segment. Residues 191–282 (PMPKKSMFFH…YSSKRLFYWS (92 aa)) are Cytoplasmic-facing. Residues 283 to 303 (LWWAFATAGFNQVLNYVQILW) traverse the membrane as a helical segment. The Extracellular portion of the chain corresponds to 304 to 316 (DYKAPSQDSSIYN). Residues 317 to 337 (GAVEAIATFGGAVAAFAVGYV) traverse the membrane as a helical segment. Over 338-342 (KVNWD) the chain is Cytoplasmic. A helical membrane pass occupies residues 343-363 (LLGELALVVFSVVNAGSLFLM). Over 364–375 (HYTANIWACYAG) the chain is Extracellular. A helical transmembrane segment spans residues 376 to 396 (YLIFKSSYMLLITIAVFQIAV). Topologically, residues 397–405 (NLNVERYAL) are cytoplasmic. The chain crosses the membrane as a helical span at residues 406 to 426 (VFGINTFIALVIQTIMTVIVV). At 427 to 434 (DQRGLNLP) the chain is on the extracellular side. A helical membrane pass occupies residues 435 to 455 (VSIQFLVYGSYFAVIAGIFLM). The Cytoplasmic portion of the chain corresponds to 456 to 496 (RSMYITYSTKSQKDVQSPAPSENPDVSHPEEESNIIMSTKL). The interval 468–496 (KDVQSPAPSENPDVSHPEEESNIIMSTKL) is disordered.

This sequence belongs to the reduced folate carrier (RFC) transporter (TC 2.A.48) family. Widely expressed but most abundant in placenta, kidney and liver.

Its subcellular location is the membrane. The catalysed reaction is thiamine(out) + H(+)(in) = thiamine(in) + H(+)(out). It catalyses the reaction pyridoxine(out) + n H(+)(out) = pyridoxine(in) + n H(+)(in). Its activity is regulated as follows. Pyridoxine transport is inhibited by carbonyl cyanide p-trifluoromethoxyphenylhydrazone (FCCP) and carbonyl cyanide m-chlorophenylhydrazone (CCCP). Its function is as follows. Mediates high affinity thiamine uptake, probably via a proton anti-port mechanism. Has no folate transport activity. Mediates H(+)-dependent pyridoxine transport. This is Thiamine transporter 2 (SLC19A3) from Homo sapiens (Human).